A 215-amino-acid polypeptide reads, in one-letter code: MKGVYFVSGIDTDIGKTVATGMLAKQLLQQGKSVITQKPVQTGCQDIAEDIAVHRKIMGIPMQEADKRRLTMPEIFSYPASPHLAARLDGRALDLDKIRTATQELAAQYEIVLVEGAGGLMVPLTEKLLTIDYIQQQAYPVILVTSGRLGSINHTLLSFAALKQYGIRLHSLVFNHIHDSRDAHIAQYSLSYLKCRLKADFSEAEWMELAKTDAV.

ATP is bound at residue 13–18 (DIGKTV). Position 17 (Thr-17) interacts with Mg(2+). Lys-38 is a catalytic residue. Substrate is bound at residue Thr-42. ATP-binding positions include Asp-50, 115 to 118 (EGAG), and 175 to 176 (NH). Positions 50 and 115 each coordinate Mg(2+).

This sequence belongs to the dethiobiotin synthetase family. In terms of assembly, homodimer. Mg(2+) is required as a cofactor.

It localises to the cytoplasm. It carries out the reaction (7R,8S)-7,8-diammoniononanoate + CO2 + ATP = (4R,5S)-dethiobiotin + ADP + phosphate + 3 H(+). The protein operates within cofactor biosynthesis; biotin biosynthesis; biotin from 7,8-diaminononanoate: step 1/2. In terms of biological role, catalyzes a mechanistically unusual reaction, the ATP-dependent insertion of CO2 between the N7 and N8 nitrogen atoms of 7,8-diaminopelargonic acid (DAPA, also called 7,8-diammoniononanoate) to form a ureido ring. The chain is ATP-dependent dethiobiotin synthetase BioD from Neisseria meningitidis serogroup C / serotype 2a (strain ATCC 700532 / DSM 15464 / FAM18).